A 423-amino-acid chain; its full sequence is Dihydroorotase-like protein (423 aa).

It belongs to the metallo-dependent hydrolases superfamily. DHOase family. PyrC' subfamily. Heterododecamer of 6 active PyrB subunits and 6 non-catalytic PyrC' subunits.

In terms of biological role, non-functional DHOase. In Pseudomonas aeruginosa (strain ATCC 15692 / DSM 22644 / CIP 104116 / JCM 14847 / LMG 12228 / 1C / PRS 101 / PAO1), this protein is Dihydroorotase-like protein (pyrC').